Reading from the N-terminus, the 265-residue chain is Mlc titration factor A (265 aa).

Zn(2+) contacts are provided by His-111, His-148, His-152, and Glu-211.

The protein belongs to the MtfA family. Interacts with Mlc. It depends on Zn(2+) as a cofactor.

It localises to the cytoplasm. Functionally, involved in the modulation of the activity of the glucose-phosphotransferase system (glucose-PTS). Interacts with the transcriptional repressor Mlc, preventing its interaction with DNA and leading to the modulation of expression of genes regulated by Mlc, including ptsG, which encodes the PTS system glucose-specific EIICB component. In terms of biological role, shows zinc-dependent metallopeptidase activity. The polypeptide is Mlc titration factor A (Escherichia coli (strain SMS-3-5 / SECEC)).